Here is a 129-residue protein sequence, read N- to C-terminus: Fluoride-specific ion channel FluC (129 aa).

The next 4 helical transmembrane spans lie at 8–28 (FFCV…MVLA), 36–56 (AFPF…GLLL), 71–91 (FLGV…VEVV), and 103–123 (ALHI…AMML). Na(+) contacts are provided by Gly78 and Thr81.

This sequence belongs to the fluoride channel Fluc/FEX (TC 1.A.43) family.

The protein localises to the cell inner membrane. The catalysed reaction is fluoride(in) = fluoride(out). Its activity is regulated as follows. Na(+) is not transported, but it plays an essential structural role and its presence is essential for fluoride channel function. In terms of biological role, fluoride-specific ion channel. Important for reducing fluoride concentration in the cell, thus reducing its toxicity. In Idiomarina loihiensis (strain ATCC BAA-735 / DSM 15497 / L2-TR), this protein is Fluoride-specific ion channel FluC.